Consider the following 912-residue polypeptide: DNA (cytosine-5)-methyltransferase 3A (912 aa).

2 disordered regions span residues 1–178 and 221–286; these read MPAM…GWES and IAGM…EYED. Residues 17-40 are compositionally biased toward basic and acidic residues; the sequence is AEREEDRKDGEEQEEPRGKEERQE. Over residues 47–57 the composition is skewed to basic residues; the sequence is KVGRPGRKRKH. Polar residues predominate over residues 74–83; sequence KSPSMAQDSG. Ser105 carries the phosphoserine modification. Low complexity predominate over residues 113 to 128; the sequence is GAPAEGEGAAETLPEA. Thr124 carries the post-translational modification Phosphothreonine. Over residues 149 to 167 the composition is skewed to basic and acidic residues; that stretch reads AGKEQKETNIESMKMEGSR. Lys162 participates in a covalent cross-link: Glycyl lysine isopeptide (Lys-Gly) (interchain with G-Cter in SUMO2). Omega-N-methylarginine is present on Arg171. Residues 199 to 403 are interaction with DNMT1 and DNMT3B; that stretch reads SKRKRDEWLA…DTAKAVEVQN (205 aa). A phosphoserine mark is found at Ser243 and Ser255. Residues 246–260 are compositionally biased toward polar residues; it reads AVQQPTDPASPTVAT. A Phosphothreonine modification is found at Thr261. Ser267 carries the phosphoserine modification. Basic and acidic residues predominate over residues 269-279; sequence AGDKNATKAGD. Residues 292–350 form the PWWP domain; it reads IGELVWGKLRGFSWWPGRIVSWWMTGRSRAAEGTRWVMWFGDGKFSVVCVEKLMPLSSF. Phosphoserine is present on residues Ser390 and Ser393. Positions 447–466 are disordered; that stretch reads AYAPPPPAKKPRKSTAEKPK. Residues 482–614 form the ADD domain; the sequence is EVRQKCRNIE…LQMFFANNHD (133 aa). The GATA-type; atypical zinc-finger motif lies at 493 to 523; it reads ICISCGSLNVTLEHPLFVGGMCQNCKNCFLE. The tract at residues 494 to 586 is interaction with the PRC2/EED-EZH2 complex; that stretch reads CISCGSLNVT…KEDPWNCYMC (93 aa). The PHD-type; atypical zinc-finger motif lies at 534–590; sequence QSYCTICCGGREVLMCGNNNCCRCFCVECVDLLVGPGAAQAAIKEDPWNCYMCGHKG. The SAM-dependent MTase C5-type domain maps to 634-912; it reads IRVLSLFDGI…APLKEYFACV (279 aa). S-adenosyl-L-methionine is bound by residues 641–645, Glu664, and 686–688; these read DGIAT and DVR. Residue Cys710 is part of the active site. Cys710 is subject to S-methylcysteine; by autocatalysis. Residue 891–893 participates in S-adenosyl-L-methionine binding; it reads RSW.

It belongs to the class I-like SAM-binding methyltransferase superfamily. C5-methyltransferase family. As to quaternary structure, heterotetramer composed of 1 DNMT3A homodimer and 2 DNMT3L subunits (DNMT3L-DNMT3A-DNMT3A-DNMT3L). Interacts with UBC9, PIAS1 and PIAS2. Binds the ZBTB18 transcriptional repressor. Interacts with SETDB1. Associates with HDAC1 through its ADD domain. Interacts with UHRF1. Interacts with DNMT1 and DNMT3B. Interacts with the PRC2/EED-EZH2 complex. Interacts with MPHOSPH8. Interacts with histone H3 that is not methylated at 'Lys-4' (H3K4). Interacts with SPOCD1. Interacts with ZNF263; recruited to the SIX3 promoter along with other proteins involved in chromatin modification and transcriptional corepression where it contributes to transcriptional repression. In terms of processing, sumoylated; sumoylation disrupts the ability to interact with histone deacetylases (HDAC1 and HDAC2) and repress transcription. Auto-methylated at Cys-710: auto-methylation takes place in absence of DNA substrate and inactivates the DNA methyltransferase activity. Inactivation by auto-methylation may be used to inactivate unused DNA methyltransferases in the cell. As to expression, highly expressed in fetal tissues, skeletal muscle, heart, peripheral blood mononuclear cells, kidney, and at lower levels in placenta, brain, liver, colon, spleen, small intestine and lung.

The protein localises to the nucleus. It is found in the chromosome. The protein resides in the cytoplasm. It carries out the reaction a 2'-deoxycytidine in DNA + S-adenosyl-L-methionine = a 5-methyl-2'-deoxycytidine in DNA + S-adenosyl-L-homocysteine + H(+). It catalyses the reaction L-cysteinyl-[protein] + S-adenosyl-L-methionine = S-methyl-L-cysteinyl-[protein] + S-adenosyl-L-homocysteine + H(+). With respect to regulation, activated by binding to the regulatory factor DNMT3L. Auto-methylation at Cys-710 in absence of DNA inactivates the DNA methyltransferase activity. Required for genome-wide de novo methylation and is essential for the establishment of DNA methylation patterns during development. DNA methylation is coordinated with methylation of histones. It modifies DNA in a non-processive manner and also methylates non-CpG sites. May preferentially methylate DNA linker between 2 nucleosomal cores and is inhibited by histone H1. Plays a role in paternal and maternal imprinting. Required for methylation of most imprinted loci in germ cells. Acts as a transcriptional corepressor for ZBTB18. Recruited to trimethylated 'Lys-36' of histone H3 (H3K36me3) sites. Can actively repress transcription through the recruitment of HDAC activity. Also has weak auto-methylation activity on Cys-710 in absence of DNA. In Homo sapiens (Human), this protein is DNA (cytosine-5)-methyltransferase 3A (DNMT3A).